A 71-amino-acid chain; its full sequence is Prokaryotic ubiquitin-like protein Pup (71 aa).

Residues methionine 1 to glycine 18 show a composition bias toward low complexity. A disordered region spans residues methionine 1 to aspartate 42. The tract at residues glutamate 27–tyrosine 65 is ARC ATPase binding. Residues serine 29–glutamate 60 adopt a coiled-coil conformation. Glutamate 71 participates in a covalent cross-link: Isoglutamyl lysine isopeptide (Glu-Lys) (interchain with K-? in acceptor proteins).

It belongs to the prokaryotic ubiquitin-like protein family. Strongly interacts with the proteasome-associated ATPase ARC through a hydrophobic interface; the interacting region of Pup lies in its C-terminal half. There is one Pup binding site per ARC hexamer ring.

It participates in protein degradation; proteasomal Pup-dependent pathway. In terms of biological role, protein modifier that is covalently attached to lysine residues of substrate proteins, thereby targeting them for proteasomal degradation. The tagging system is termed pupylation. The protein is Prokaryotic ubiquitin-like protein Pup of Salinispora tropica (strain ATCC BAA-916 / DSM 44818 / JCM 13857 / NBRC 105044 / CNB-440).